The primary structure comprises 237 residues: 2-C-methyl-D-erythritol 4-phosphate cytidylyltransferase (237 aa).

This sequence belongs to the IspD/TarI cytidylyltransferase family. IspD subfamily.

The enzyme catalyses 2-C-methyl-D-erythritol 4-phosphate + CTP + H(+) = 4-CDP-2-C-methyl-D-erythritol + diphosphate. It participates in isoprenoid biosynthesis; isopentenyl diphosphate biosynthesis via DXP pathway; isopentenyl diphosphate from 1-deoxy-D-xylulose 5-phosphate: step 2/6. In terms of biological role, catalyzes the formation of 4-diphosphocytidyl-2-C-methyl-D-erythritol from CTP and 2-C-methyl-D-erythritol 4-phosphate (MEP). The polypeptide is 2-C-methyl-D-erythritol 4-phosphate cytidylyltransferase (Vibrio vulnificus (strain YJ016)).